The primary structure comprises 20 residues: Snaclec ophioluxin subunit alpha (20 aa).

The cysteines at positions 4 and 15 are disulfide-linked. The C-type lectin domain maps to 11–20; it reads YDQHCYRIIN.

It belongs to the snaclec family. As to quaternary structure, heterodimer of subunits alpha and beta; disulfide-linked. As to expression, expressed by the venom gland.

The protein resides in the secreted. Binds to the platelet and collagen receptor glycoprotein VI (GP6) and activates platelet aggregation. This is Snaclec ophioluxin subunit alpha from Ophiophagus hannah (King cobra).